Reading from the N-terminus, the 102-residue chain is NADH-quinone oxidoreductase subunit K (102 aa).

3 helical membrane passes run 6-26, 30-50, and 62-82; these read LEHG…GLMV, ILFV…AFIV, and VMFI…LAIL.

This sequence belongs to the complex I subunit 4L family. As to quaternary structure, NDH-1 is composed of 13 different subunits. Subunits NuoA, H, J, K, L, M, N constitute the membrane sector of the complex.

The protein resides in the cell inner membrane. The enzyme catalyses a quinone + NADH + 5 H(+)(in) = a quinol + NAD(+) + 4 H(+)(out). Its function is as follows. NDH-1 shuttles electrons from NADH, via FMN and iron-sulfur (Fe-S) centers, to quinones in the respiratory chain. The immediate electron acceptor for the enzyme in this species is believed to be ubiquinone. Couples the redox reaction to proton translocation (for every two electrons transferred, four hydrogen ions are translocated across the cytoplasmic membrane), and thus conserves the redox energy in a proton gradient. This chain is NADH-quinone oxidoreductase subunit K, found in Pseudomonas putida (strain W619).